The primary structure comprises 511 residues: Coatomer subunit delta (511 aa).

Over residues Gln-168 to Gly-177 the composition is skewed to basic and acidic residues. A disordered region spans residues Gln-168–Ser-188. A Phosphoserine modification is found at Ser-223. An N6-acetyllysine mark is found at Lys-233 and Lys-241. At Ser-244 the chain carries Phosphoserine. The MHD domain maps to Met-271–Leu-511. N6-acetyllysine occurs at positions 309 and 351. At Ser-493 the chain carries Phosphoserine.

Belongs to the adaptor complexes medium subunit family. Delta-COP subfamily. As to quaternary structure, oligomeric complex that consists of at least the alpha, beta, beta', gamma, delta, epsilon and zeta subunits. As to expression, ubiquitously expressed.

It localises to the cytoplasm. The protein resides in the golgi apparatus membrane. It is found in the cytoplasmic vesicle. Its subcellular location is the COPI-coated vesicle membrane. Component of the coatomer, a cytosolic protein complex that binds to dilysine motifs and reversibly associates with Golgi non-clathrin-coated vesicles, which further mediate biosynthetic protein transport from the ER, via the Golgi up to the trans Golgi network. The coatomer complex is required for budding from Golgi membranes, and is essential for the retrograde Golgi-to-ER transport of dilysine-tagged proteins. In mammals, the coatomer can only be recruited by membranes associated to ADP-ribosylation factors (ARFs), which are small GTP-binding proteins; the complex also influences the Golgi structural integrity, as well as the processing, activity, and endocytic recycling of LDL receptors. The polypeptide is Coatomer subunit delta (ARCN1) (Homo sapiens (Human)).